Consider the following 153-residue polypeptide: MTVTDIGLVIMIVIALLFAVFDEFIVDYALRGKTRLRVPLRRQGRLDGLIFIVLLLILLYKNITTDGKVMTSTLILFLGLMVIYLAYIRCPRMLFKTEGFFYGNVFINYSRIKNMNLSEDGYLVIDLEKRSLLIQVNKLDDLQKIYHLLIEIQ.

The next 3 membrane-spanning stretches (helical) occupy residues I6–V26, L46–D66, and K68–I88.

This sequence belongs to the UPF0266 family.

The protein localises to the cell inner membrane. In Sodalis glossinidius (strain morsitans), this protein is UPF0266 membrane protein SG1324.